The chain runs to 417 residues: E3 ubiquitin-protein ligase RNF135 (417 aa).

The RING-type zinc-finger motif lies at 21-67 (CIICQGLLDQPTTLPCGHSFCLRCLHDLWVSKRGAVDGCPWACPICR). 2 disordered regions span residues 95–118 (EVEAGSEPEPAPAPRSAPQVTVQK) and 143–173 (TQRPNLGSGQDNAQGTPPTDSSSEGEHSLDS). Coiled coils occupy residues 121 to 145 (TNVIQELTDMVRQLVDDVKSLQTQR) and 180 to 204 (SISQKKIQEILHNLEEIQEKLQGSV). Over residues 143-164 (TQRPNLGSGQDNAQGTPPTDSS) the composition is skewed to polar residues. The B30.2/SPRY domain maps to 225-417 (PDQRRPAPRK…NYLEIKQLNT (193 aa)).

As to quaternary structure, homodimer. Interacts (homodimer) with RIGI (double-stranded RNA-bound oligomeric form); involved in both RIGI ubiquitination, oligomerization into filaments associated with viral RNAs and the bridging of these filaments. Interacts with UBE2D3 and UBE2N; E2 ubiquitin ligases involved in RNF135-mediated ubiquitination of RIGI and activation of the RIG-I signaling pathway. Interacts with PCBP2. In terms of tissue distribution, ubiquitously expressed.

Its subcellular location is the cytoplasm. The protein localises to the stress granule. The enzyme catalyses S-ubiquitinyl-[E2 ubiquitin-conjugating enzyme]-L-cysteine + [acceptor protein]-L-lysine = [E2 ubiquitin-conjugating enzyme]-L-cysteine + N(6)-ubiquitinyl-[acceptor protein]-L-lysine.. Its pathway is protein modification; protein ubiquitination. E2-dependent E3 ubiquitin-protein ligase that functions as a RIGI coreceptor in the sensing of viral RNAs in cell cytoplasm and the activation of the antiviral innate immune response. Together with the UBE2D3, UBE2N and UB2V1 E2 ligases, catalyzes the 'Lys-63'-linked polyubiquitination of RIGI oligomerized on viral RNAs, an essential step in the activation of the RIG-I signaling pathway. Through a ubiquitin-independent parallel mechanism, which consists in bridging RIGI filaments forming on longer viral RNAs, further activates the RIG-I signaling pathway. This second mechanism that synergizes with the ubiquitin-dependent one would thereby allow an RNA length-dependent regulation of the RIG-I signaling pathway. Associated with the E2 ligase UBE2N, also constitutively synthesizes unanchored 'Lys-63'-linked polyubiquitin chains that may also activate the RIG-I signaling pathway. It is not involved in the innate immune response against DNA viruses. The protein is E3 ubiquitin-protein ligase RNF135 of Mus musculus (Mouse).